The chain runs to 441 residues: Hexane cyclase gkaB (441 aa).

The first 25 residues, 1-25, serve as a signal peptide directing secretion; the sequence is MTKFLAGAAIVLAVAFGSFFSQSST. 4 N-linked (GlcNAc...) asparagine glycosylation sites follow: N77, N153, N184, and N308.

This sequence belongs to the Diels-Alderase family.

It functions in the pathway mycotoxin biosynthesis. Hexane cyclase; part of the gene cluster that mediates the biosynthesis of GKK1032, fungal natural products containing a macrocyclic para-cyclophane connected to a decahydrofluorene ring system that show potent antitumor activities. Within the pathway, gkaB functions synergistically with gkaX and gkaZ to form the cyclophane. The pathway begins with the PKS-NRPS gkaA which, with the help of the trans-enoyl reductase gkaC, synthesizes the polyketide-tyrosyl acyl thioester product which can be reductively off-loaded by the terminal reductase (R) domain in gkaA. The alpha/beta hydrolase gkaG is then required to catalyze the subsequent Knoevenagel condensation that affords the 3-pyrrolin-2-one ring, whereas the three proteins gkaB, gkaX and gkaZ then function synergistically to form the cyclophane. This chain is Hexane cyclase gkaB, found in Penicillium citrinum.